The chain runs to 524 residues: Translation initiation factor eIF2B subunit delta (524 aa).

The interval methionine 1–aspartate 173 is disordered. Alanine 2 is modified (N-acetylalanine). Serine 12 carries the phosphoserine modification. Positions alanine 26 to arginine 40 are enriched in basic and acidic residues. Positions lysine 41–lysine 51 are enriched in basic residues. At threonine 86 the chain carries Phosphothreonine. Composition is skewed to basic and acidic residues over residues alanine 87–aspartate 121 and lysine 161–aspartate 173. The tract at residues arginine 171–leucine 180 is may bind the chemical integrated stress response (ISR) inhibitor ISRIB.

This sequence belongs to the eIF-2B alpha/beta/delta subunits family. Component of the translation initiation factor 2B (eIF2B) complex which is a heterodecamer of two sets of five different subunits: alpha, beta, gamma, delta and epsilon. Subunits alpha, beta and delta comprise a regulatory subcomplex and subunits epsilon and gamma comprise a catalytic subcomplex. Within the complex, the hexameric regulatory complex resides at the center, with the two heterodimeric catalytic subcomplexes bound on opposite sides.

The protein localises to the cytoplasm. It is found in the cytosol. With respect to regulation, activated by the chemical integrated stress response (ISR) inhibitor ISRIB which stimulates guanine nucleotide exchange factor activity for both phosphorylated and unphosphorylated eIF2. Functionally, acts as a component of the translation initiation factor 2B (eIF2B) complex, which catalyzes the exchange of GDP for GTP on eukaryotic initiation factor 2 (eIF2) gamma subunit. Its guanine nucleotide exchange factor activity is repressed when bound to eIF2 complex phosphorylated on the alpha subunit, thereby limiting the amount of methionyl-initiator methionine tRNA available to the ribosome and consequently global translation is repressed. The protein is Translation initiation factor eIF2B subunit delta (EIF2B4) of Bos taurus (Bovine).